A 374-amino-acid chain; its full sequence is DNA primase small subunit PriS (374 aa).

Catalysis depends on residues D99, D101, and D281.

The protein belongs to the eukaryotic-type primase small subunit family. In terms of assembly, heterodimer of a small subunit (PriS) and a large subunit (PriL). The cofactor is Mg(2+). It depends on Mn(2+) as a cofactor.

Catalytic subunit of DNA primase, an RNA polymerase that catalyzes the synthesis of short RNA molecules used as primers for DNA polymerase during DNA replication. The small subunit contains the primase catalytic core and has DNA synthesis activity on its own. Binding to the large subunit stabilizes and modulates the activity, increasing the rate of DNA synthesis while decreasing the length of the DNA fragments, and conferring RNA synthesis capability. The DNA polymerase activity may enable DNA primase to also catalyze primer extension after primer synthesis. May also play a role in DNA repair. The protein is DNA primase small subunit PriS of Methanoregula boonei (strain DSM 21154 / JCM 14090 / 6A8).